Here is a 408-residue protein sequence, read N- to C-terminus: LL-diaminopimelate aminotransferase (408 aa).

2 residues coordinate substrate: tyrosine 15 and glycine 42. Pyridoxal 5'-phosphate-binding positions include tyrosine 72, 108–109 (SK), tyrosine 132, asparagine 187, tyrosine 218, and 246–248 (SFS). Positions 109, 132, and 187 each coordinate substrate. At lysine 249 the chain carries N6-(pyridoxal phosphate)lysine. Pyridoxal 5'-phosphate-binding residues include arginine 257 and asparagine 292. The substrate site is built by asparagine 292 and arginine 388.

The protein belongs to the class-I pyridoxal-phosphate-dependent aminotransferase family. LL-diaminopimelate aminotransferase subfamily. As to quaternary structure, homodimer. The cofactor is pyridoxal 5'-phosphate.

It catalyses the reaction (2S,6S)-2,6-diaminopimelate + 2-oxoglutarate = (S)-2,3,4,5-tetrahydrodipicolinate + L-glutamate + H2O + H(+). Its pathway is amino-acid biosynthesis; L-lysine biosynthesis via DAP pathway; LL-2,6-diaminopimelate from (S)-tetrahydrodipicolinate (aminotransferase route): step 1/1. In terms of biological role, involved in the synthesis of meso-diaminopimelate (m-DAP or DL-DAP), required for both lysine and peptidoglycan biosynthesis. Catalyzes the direct conversion of tetrahydrodipicolinate to LL-diaminopimelate. The chain is LL-diaminopimelate aminotransferase from Prochlorococcus marinus (strain SARG / CCMP1375 / SS120).